Here is a 411-residue protein sequence, read N- to C-terminus: Serine hydroxymethyltransferase (411 aa).

Residues Leu117 and 121 to 123 contribute to the (6S)-5,6,7,8-tetrahydrofolate site; that span reads GHL. Lys226 bears the N6-(pyridoxal phosphate)lysine mark. (6S)-5,6,7,8-tetrahydrofolate contacts are provided by residues Glu241 and 349 to 351; that span reads SPF.

It belongs to the SHMT family. Homodimer. Pyridoxal 5'-phosphate is required as a cofactor.

It localises to the cytoplasm. The catalysed reaction is (6R)-5,10-methylene-5,6,7,8-tetrahydrofolate + glycine + H2O = (6S)-5,6,7,8-tetrahydrofolate + L-serine. The protein operates within one-carbon metabolism; tetrahydrofolate interconversion. It participates in amino-acid biosynthesis; glycine biosynthesis; glycine from L-serine: step 1/1. Its function is as follows. Catalyzes the reversible interconversion of serine and glycine with tetrahydrofolate (THF) serving as the one-carbon carrier. This reaction serves as the major source of one-carbon groups required for the biosynthesis of purines, thymidylate, methionine, and other important biomolecules. Also exhibits THF-independent aldolase activity toward beta-hydroxyamino acids, producing glycine and aldehydes, via a retro-aldol mechanism. In Oceanobacillus iheyensis (strain DSM 14371 / CIP 107618 / JCM 11309 / KCTC 3954 / HTE831), this protein is Serine hydroxymethyltransferase.